A 347-amino-acid polypeptide reads, in one-letter code: Ribosomal RNA small subunit methyltransferase C (347 aa).

Belongs to the methyltransferase superfamily. RsmC family. As to quaternary structure, monomer.

It is found in the cytoplasm. The catalysed reaction is guanosine(1207) in 16S rRNA + S-adenosyl-L-methionine = N(2)-methylguanosine(1207) in 16S rRNA + S-adenosyl-L-homocysteine + H(+). Functionally, specifically methylates the guanine in position 1207 of 16S rRNA in the 30S particle. The chain is Ribosomal RNA small subunit methyltransferase C from Shewanella baltica (strain OS195).